A 237-amino-acid chain; its full sequence is Survival of motor neuron-related-splicing factor 30 (237 aa).

A compositionally biased stretch (polar residues) spans 52-69 (SQPAEGTTSTKSSETVAP). Disordered regions lie at residues 52–73 (SQPA…SHSW) and 149–198 (REYK…RSIF). The 61-residue stretch at 72–132 (SWRVGDHCMA…KKVEEGRIRD (61 aa)) folds into the Tudor domain. The Nuclear localization signal signature appears at 142-160 (KELQAEQREYKKKKAQKKV). Residues 151 to 161 (YKKKKAQKKVQ) are compositionally biased toward basic residues. Positions 162–175 (RMKELEQEREDQKS) are enriched in basic and acidic residues. Residues 176-185 (KWQQFNNKAY) show a composition bias toward polar residues.

The protein belongs to the SMN family. As to quaternary structure, associates with spliceosomes.

Its subcellular location is the nucleus speckle. The protein resides in the nucleus. The protein localises to the cajal body. Functionally, involved in spliceosome assembly. This Danio rerio (Zebrafish) protein is Survival of motor neuron-related-splicing factor 30 (smndc1).